A 416-amino-acid chain; its full sequence is Phosphoglycerate kinase (416 aa).

(2R)-3-phosphoglycerate-binding residues include Val-22, Asp-23, Phe-24, Asn-25, Gln-37, Arg-38, Ser-61, His-62, Gly-64, Arg-65, Leu-120, Arg-121, His-168, and Arg-169. ADP is bound at residue Gly-212. Gly-212 provides a ligand contact to CDP. AMP-binding residues include Ala-213 and Lys-214. Ala-213 is a binding site for ATP. A Mg(2+)-binding site is contributed by Ala-213. Position 217 (Asp-217) interacts with CDP. Asp-217 is a Mg(2+) binding site. Lys-218 serves as a coordination point for AMP. Residue Lys-218 coordinates ATP. Residue Gly-236 participates in ADP binding. Gly-236 contacts CDP. AMP-binding residues include Gly-237 and Gly-311. Residues Gly-237 and Gly-311 each coordinate ATP. Gly-336 and Phe-341 together coordinate CDP. Phe-341 is an ADP binding site. Glu-342 is a binding site for AMP. Residues Glu-342, Asp-373, and Thr-374 each coordinate ATP. Asp-373 serves as a coordination point for Mg(2+).

Belongs to the phosphoglycerate kinase family. Monomer. Requires Mg(2+) as cofactor. In terms of tissue distribution, expressed in all cells of the worm (at protein level), higher expression in the cells associated with the tubercles (tegumental modifications), the muscle and along the tegument.

It carries out the reaction (2R)-3-phosphoglycerate + ATP = (2R)-3-phospho-glyceroyl phosphate + ADP. It functions in the pathway carbohydrate degradation; glycolysis; pyruvate from D-glyceraldehyde 3-phosphate: step 2/5. Functionally, involved in the seventh step in glycolysis. Catalyzes the conversion of 1,3-bisphosphoglycerate ((2R)-3-phospho-glyceroyl phosphate) to 3-phosphoglycerate ((2R)-3-phosphoglycerate) and results in the formation of ATP. Associated with the tegument to provide the energy needed for the tegumental repair resulting from immune damage. The sequence is that of Phosphoglycerate kinase (PGK) from Schistosoma mansoni (Blood fluke).